A 381-amino-acid chain; its full sequence is S-adenosylmethionine synthase (381 aa).

His15 provides a ligand contact to ATP. Asp17 provides a ligand contact to Mg(2+). Glu43 lines the K(+) pocket. L-methionine-binding residues include Glu56 and Gln99. The segment at 99–109 is flexible loop; that stretch reads QSLDIAQGVDN. ATP is bound by residues 164 to 166, 230 to 231, Asp239, 245 to 246, and Lys266; these read DGK, RF, and RK. Asp239 is an L-methionine binding site. Lys270 serves as a coordination point for L-methionine.

The protein belongs to the AdoMet synthase family. In terms of assembly, homotetramer; dimer of dimers. Mg(2+) is required as a cofactor. K(+) serves as cofactor.

It is found in the cytoplasm. The enzyme catalyses L-methionine + ATP + H2O = S-adenosyl-L-methionine + phosphate + diphosphate. It participates in amino-acid biosynthesis; S-adenosyl-L-methionine biosynthesis; S-adenosyl-L-methionine from L-methionine: step 1/1. Catalyzes the formation of S-adenosylmethionine (AdoMet) from methionine and ATP. The overall synthetic reaction is composed of two sequential steps, AdoMet formation and the subsequent tripolyphosphate hydrolysis which occurs prior to release of AdoMet from the enzyme. This Legionella jeonii protein is S-adenosylmethionine synthase.